We begin with the raw amino-acid sequence, 563 residues long: Calnexin homolog (563 aa).

Positions 1–23 are cleaved as a signal peptide; the sequence is MRFNAAITGALVSSATLMGQAHA. At 24–493 the chain is on the lumenal side; sequence EETEKKADAT…PINAVKQVPE (470 aa). Ca(2+) is bound at residue D98. A disulfide bond links C141 and C175. The an alpha-D-glucoside site is built by Y145, K147, Y166, and D173. N236 carries N-linked (GlcNAc...) asparagine glycosylation. The interval 241–323 is disordered; sequence EDFAPPVNPE…EKPEDWDDEE (83 aa). Residues 249–279 show a composition bias toward basic and acidic residues; it reads PEKEIDDPKDKKPADWVDEAKIPDPEAKKPD. The segment at 253-386 is p domain (Extended arm); sequence IDDPKDKKPA…RKIPNPAYFE (134 aa). Acidic residues predominate over residues 280 to 305; the sequence is DWDEDAPYEIVDEEATMPEDWLEDEP. Cysteines 337 and 343 form a disulfide. Position 402 (E402) interacts with an alpha-D-glucoside. D413 provides a ligand contact to Ca(2+). Residues 494 to 514 form a helical membrane-spanning segment; the sequence is VAGGLGALLLTMILVIVGAVG. At 515 to 563 the chain is on the cytoplasmic side; that stretch reads ASSPAPAAAAKKGKEAASAAKEKASEAVSSAADTAKGAATKRNTRSSAQ. The disordered stretch occupies residues 521–563; it reads AAAAKKGKEAASAAKEKASEAVSSAADTAKGAATKRNTRSSAQ. Over residues 526-539 the composition is skewed to basic and acidic residues; the sequence is KGKEAASAAKEKAS.

This sequence belongs to the calreticulin family.

It is found in the endoplasmic reticulum membrane. Interacts with newly synthesized monoglucosylated glycoproteins in the endoplasmic reticulum. It may act in assisting protein assembly and/or in the retention within the ER of unassembled protein subunits. It seems to play a major role in the quality control apparatus of the ER by the retention of incorrectly folded proteins. The protein is Calnexin homolog of Aspergillus fumigatus (strain ATCC MYA-4609 / CBS 101355 / FGSC A1100 / Af293) (Neosartorya fumigata).